Reading from the N-terminus, the 46-residue chain is Alpha-1-antiproteinase (46 aa).

At Ser30 the chain carries Phosphoserine.

It belongs to the serpin family. In terms of processing, N-glycosylated; contains bi- and triantennary glycans with a bisecting N-acetylglucosamine and fucose residue. In terms of tissue distribution, plasma.

It localises to the secreted. This is Alpha-1-antiproteinase from Notamacropus eugenii (Tammar wallaby).